Reading from the N-terminus, the 697-residue chain is uncharacterized protein (697 aa).

The next 5 membrane-spanning stretches (helical) occupy residues 45–65 (LCAV…LALL), 86–106 (TVAA…MGVV), 128–148 (VVVS…GMLA), 198–218 (VLLG…WWAL), and 280–300 (HLAI…ILAG). 2 consecutive ABC transporter domains span residues 251–473 (VRLD…QPQH) and 477–696 (LELV…AGGM). ATP-binding positions include 285–292 (GANGSGKT) and 514–521 (GGNGSGKS). The helical transmembrane segment at 522-542 (TLAWIMAGLTIPTTGACLLDG) threads the bilayer.

The protein belongs to the ABC transporter superfamily.

It localises to the cell membrane. This is an uncharacterized protein from Mycobacterium tuberculosis (strain CDC 1551 / Oshkosh).